The following is a 214-amino-acid chain: Cytochrome c biogenesis ATP-binding export protein CcmA (214 aa).

One can recognise an ABC transporter domain in the interval 12–214; that stretch reads LAARALAFSR…TRMLTLEAAA (203 aa). An ATP-binding site is contributed by 44-51; the sequence is GDNGAGKT.

The protein belongs to the ABC transporter superfamily. CcmA exporter (TC 3.A.1.107) family. As to quaternary structure, the complex is composed of two ATP-binding proteins (CcmA) and two transmembrane proteins (CcmB).

It is found in the cell inner membrane. The catalysed reaction is heme b(in) + ATP + H2O = heme b(out) + ADP + phosphate + H(+). Part of the ABC transporter complex CcmAB involved in the biogenesis of c-type cytochromes; once thought to export heme, this seems not to be the case, but its exact role is uncertain. Responsible for energy coupling to the transport system. This is Cytochrome c biogenesis ATP-binding export protein CcmA from Xanthomonas campestris pv. campestris (strain 8004).